Reading from the N-terminus, the 186-residue chain is uncharacterized protein (186 aa).

This is an uncharacterized protein from Haemophilus influenzae (strain ATCC 51907 / DSM 11121 / KW20 / Rd).